A 306-amino-acid polypeptide reads, in one-letter code: Curved DNA-binding protein (306 aa).

A J domain is found at 5 to 69 (DYYAIMGVKP…QRRAEYDQLW (65 aa)).

It localises to the cytoplasm. Its subcellular location is the nucleoid. Its function is as follows. DNA-binding protein that preferentially recognizes a curved DNA sequence. It is probably a functional analog of DnaJ; displays overlapping activities with DnaJ, but functions under different conditions, probably acting as a molecular chaperone in an adaptive response to environmental stresses other than heat shock. Lacks autonomous chaperone activity; binds native substrates and targets them for recognition by DnaK. Its activity is inhibited by the binding of CbpM. This is Curved DNA-binding protein from Salmonella paratyphi A (strain ATCC 9150 / SARB42).